Here is a 90-residue protein sequence, read N- to C-terminus: Probable Fe(2+)-trafficking protein (90 aa).

Belongs to the Fe(2+)-trafficking protein family.

Could be a mediator in iron transactions between iron acquisition and iron-requiring processes, such as synthesis and/or repair of Fe-S clusters in biosynthetic enzymes. This is Probable Fe(2+)-trafficking protein from Nitrosomonas eutropha (strain DSM 101675 / C91 / Nm57).